The chain runs to 346 residues: Growth hormone-inducible transmembrane protein (346 aa).

A mitochondrion-targeting transit peptide spans 1-45 (MLAARLVCLRTLPSRVFQPTFITKASPLVKNSITKNQWLLTPSRE). The Mitochondrial matrix portion of the chain corresponds to 46 to 83 (YATKTRIRTHRGKTGQELKEAALEPSLEKVFKIDQMGK). The helical transmembrane segment at 84–104 (WFVAGGAAVGLGALCYYGLGM) threads the bilayer. The Mitochondrial intermembrane segment spans residues 105–126 (SNEIGAIEKAVIWPQYVKDRIH). Residues 127-147 (STYMYLAGSIGLTALSALALA) traverse the membrane as a helical segment. Topologically, residues 148–160 (RSPALMNFMMTGS) are mitochondrial matrix. A helical transmembrane segment spans residues 161–181 (WMTIGATFAAMIGAGMLVQSI). Over 182-191 (SYEQSPGPKH) the chain is Mitochondrial intermembrane. A helical membrane pass occupies residues 192–212 (LAWMLHSGVMGAVVAPLTILG). The Mitochondrial matrix portion of the chain corresponds to 213–214 (GP). The chain crosses the membrane as a helical span at residues 215–235 (LLLRAAWYTAGIVGGLSTVAM). Residues 236-245 (CAPSEKFLNM) are Mitochondrial intermembrane-facing. The helical transmembrane segment at 246–266 (GAPLGVGLGLVFASSLGSMFL) threads the bilayer. Topologically, residues 267–272 (PPTSVA) are mitochondrial matrix. A helical membrane pass occupies residues 273-293 (GATLYSVAMYGGLVLFSMFLL). Over 294 to 346 (YDTQKVVKRAEITPAYGAQKYDPINSMLTIYMDTLNIFMRVATMLATGSNRKK) the chain is Mitochondrial intermembrane.

The protein belongs to the BI1 family. In terms of assembly, interacts with LETM1 and AFG3L2. Post-translationally, undergoes AFG3L2-mediated proteolytic degradation, upon hyperpolarization of mitochondria.

The protein resides in the mitochondrion inner membrane. Functionally, plays an important role in maintenance of mitochondrial morphology and in mediating either calcium or potassium/proton antiport. Mediates proton-dependent calcium efflux from mitochondrion. Also functions as an electroneutral mitochondrial proton/potassium exchanger. Required for the mitochondrial tubular network and cristae organization. Involved in apoptotic release of cytochrome c. Inhibits AFG3L2 proteolytic activity, stimulating respiration and stabilizing respiratory enzymes in actively respiring mitochondria. However, when mitochondria become hyperpolarized, GHITM loses its inhibitory activity toward AFG3L2 and the now active AFG3L2 turns first on GHITM and, if hyperpolarization persists, on other proteins of the mitochondria, leading to a broad remodeling of the proteome. The polypeptide is Growth hormone-inducible transmembrane protein (Ghitm) (Rattus norvegicus (Rat)).